The sequence spans 178 residues: ATP synthase subunit delta (178 aa).

This sequence belongs to the ATPase delta chain family. As to quaternary structure, F-type ATPases have 2 components, F(1) - the catalytic core - and F(0) - the membrane proton channel. F(1) has five subunits: alpha(3), beta(3), gamma(1), delta(1), epsilon(1). F(0) has three main subunits: a(1), b(2) and c(10-14). The alpha and beta chains form an alternating ring which encloses part of the gamma chain. F(1) is attached to F(0) by a central stalk formed by the gamma and epsilon chains, while a peripheral stalk is formed by the delta and b chains.

Its subcellular location is the cell membrane. In terms of biological role, f(1)F(0) ATP synthase produces ATP from ADP in the presence of a proton or sodium gradient. F-type ATPases consist of two structural domains, F(1) containing the extramembraneous catalytic core and F(0) containing the membrane proton channel, linked together by a central stalk and a peripheral stalk. During catalysis, ATP synthesis in the catalytic domain of F(1) is coupled via a rotary mechanism of the central stalk subunits to proton translocation. Functionally, this protein is part of the stalk that links CF(0) to CF(1). It either transmits conformational changes from CF(0) to CF(1) or is implicated in proton conduction. In Streptococcus pyogenes serotype M6 (strain ATCC BAA-946 / MGAS10394), this protein is ATP synthase subunit delta.